The sequence spans 344 residues: UDP-glucose 4-epimerase (344 aa).

NAD(+)-binding positions include 15 to 17 (GYI), 36 to 40 (DNLSN), 63 to 64 (DI), Phe85, and Lys89. 129-131 (SAT) is a binding site for substrate. Tyr153 (proton acceptor) is an active-site residue. The NAD(+) site is built by Lys157 and Tyr181. Residues 181–183 (YFN), 202–204 (NNL), 220–222 (SIF), Arg235, and 297–300 (RKGD) each bind substrate.

Belongs to the NAD(P)-dependent epimerase/dehydratase family. In terms of assembly, homodimer. Requires NAD(+) as cofactor.

The catalysed reaction is UDP-alpha-D-glucose = UDP-alpha-D-galactose. The enzyme catalyses UDP-N-acetyl-alpha-D-glucosamine = UDP-N-acetyl-alpha-D-galactosamine. It functions in the pathway carbohydrate metabolism; galactose metabolism. Functionally, catalyzes two distinct but analogous reactions: the reversible epimerization of UDP-glucose to UDP-galactose and the reversible epimerization of UDP-N-acetylglucosamine to UDP-N-acetylgalactosamine. The reaction with UDP-Gal plays a critical role in the Leloir pathway of galactose catabolism in which galactose is converted to the glycolytic intermediate glucose 6-phosphate. It contributes to the catabolism of dietary galactose and enables the endogenous biosynthesis of both UDP-Gal and UDP-GalNAc when exogenous sources are limited. Both UDP-sugar interconversions are important in the synthesis of glycoproteins and glycolipids. This chain is UDP-glucose 4-epimerase (galE), found in Dictyostelium discoideum (Social amoeba).